Consider the following 388-residue polypeptide: Transcription factor TB1 (388 aa).

In terms of domain architecture, TCP spans 115–173 (RKDRHSKISTAGGMRDRRMRLSLDVARKFFALQDMLGFDKASKTVQWLLNMSKAAIREI). 2 disordered regions span residues 180–269 (SVCE…EKNR) and 289–331 (AAGE…VGVS). A compositionally biased stretch (polar residues) spans 187–201 (SSSLSVDGKQQQHSN). 2 stretches are compositionally biased toward basic and acidic residues: residues 210–224 (GDHK…DGKK) and 247–269 (VPDK…EKNR). The R domain occupies 250-267 (KESRAKARERARERTKEK). Positions 289 to 314 (AAGEDKSPTSPSNNLNHSSSTNLVST) are enriched in low complexity.

In terms of assembly, interacts with MADS57. In terms of tissue distribution, expressed in the axillary bud of the first formed leaf node. Expressed in axillary buds, shoot apical meristem, young leaves, vascular tissues and the tips of crown roots.

It localises to the nucleus. Its function is as follows. Probable transcription factor that functions as a negative regulator of lateral branching, presumably through its expression in axillary buds. Involved in the fine tuning of shoot branching. May function as an integrator of multiple signaling pathways to regulate the development of axillary buds. Works partially downstream of strigolactones to inhibit bud outgrowth. Binds to MADS57 to suppress the negative regulation of D14 by MADS57 and balance the expression of D14 for tillering. The protein is Transcription factor TB1 of Oryza sativa subsp. japonica (Rice).